We begin with the raw amino-acid sequence, 392 residues long: Phosphoglycerate kinase (392 aa).

Residues 21–23 (DFN), Arg36, 59–62 (HLGR), Arg113, and Arg146 contribute to the substrate site. ATP is bound by residues Lys197, Glu319, and 345-348 (GGDT).

This sequence belongs to the phosphoglycerate kinase family. As to quaternary structure, monomer.

The protein resides in the cytoplasm. It catalyses the reaction (2R)-3-phosphoglycerate + ATP = (2R)-3-phospho-glyceroyl phosphate + ADP. It participates in carbohydrate degradation; glycolysis; pyruvate from D-glyceraldehyde 3-phosphate: step 2/5. The protein is Phosphoglycerate kinase of Francisella philomiragia subsp. philomiragia (strain ATCC 25017 / CCUG 19701 / FSC 153 / O#319-036).